The chain runs to 2441 residues: MAENLLDGPPNPKRAKLSSPGFSANDNTDFGSLFDLENDLPDELIPNGELSLLNSGNLVPDAASKHKQLSELLRGGSGSSINPGIGNVSASSPVQQGLGGQAQGQPNSTNMASLGAMGKSPLNQGDSSTPNLPKQAASTSGPTPPASQALNPQAQKQVGLVTSSPATSQTGPGICMNANFNQTHPGLLNSNSGHSLMNQAQQGQAQVMNGSLGAAGRGRGAGMPYPAPAMQGATSSVLAETLTQVSPQMAGHAGLNTAQAGGMTKMGMTGTTSPFGQPFSQTGGQQMGATGVNPQLASKQSMVNSLPAFPTDIKNTSVTTVPNMSQLQTSVGIVPTQAIATGPTADPEKRKLIQQQLVLLLHAHKCQRREQANGEVRACSLPHCRTMKNVLNHMTHCQAGKACQVAHCASSRQIISHWKNCTRHDCPVCLPLKNASDKRNQQTILGSPASGIQNTIGSVGAGQQNATSLSNPNPIDPSSMQRAYAALGLPYMNQPQTQLQPQVPGQQPAQPPAHQQMRTLNALGNNPMSIPAGGITTDQQPPNLISESALPTSLGATNPLMNDGSNSGNIGSLSTIPTAAPPSSTGVRKGWHEHVTQDLRSHLVHKLVQAIFPTPDPAALKDRRMENLVAYAKKVEGDMYESANSRDEYYHLLAEKIYKIQKELEEKRRSRLHKQGILGNQPALPASGAQPPVIPPAQSVRPPNGPLPLPVNRMQVSQGMNSFNPMSLGNVQLPQAPMGPRAASPMNHSVQMNSMASVPGMAISPSRMPQPPNMMGTHANNIMAQAPTQNQFLPQNQFPSSSGAMSVNSVGMGQPAAQAGVSQGQVPGAALPNPLNMLAPQASQLPCPPVTQSPLHPTPPPASTAAGMPSLQHPTAPGMTPPQPAAPTQPSTPVSSGQTPTPTPGSVPSAAQTQSTPTVQAAAQAQVTPQPQTPVQPPSVATPQSSQQQPTPVHTQPPGTPLSQAAASIDNRVPTPSSVTSAETSSQQPGPDVPMLEMKTEVQTDDAEPEPTESKGEPRSEMMEEDLQGSSQVKEETDTTEQKSEPMEVEEKKPEVKVEAKEEEENSSNDTASQSTSPSQPRKKIFKPEELRQALMPTLEALYRQDPESLPFRQPVDPQLLGIPDYFDIVKNPMDLSTIKRKLDTGQYQEPWQYVDDVWLMFNNAWLYNRKTSRVYKFCSKLAEVFEQEIDPVMQSLGYCCGRKYEFSPQTLCCYGKQLCTIPRDAAYYSYQNRYHFCEKCFTEIQGENVTLGDDPSQPQTTISKDQFEKKKNDTLDPEPFVDCKECGRKMHQICVLHYDIIWPSGFVCDNCLKKTGRPRKENKFSAKRLQTTRLGNHLEDRVNKFLRRQNHPEAGEVFVRVVASSDKTVEVKPGMKSRFVDSGEMSESFPYRTKALFAFEEIDGVDVCFFGMHVQNTALIAPHQIQGRVYISYLDSIHFFRPRCLRTAVYHEILIGYLEYVKKLGYVTGHIWACPPSEGDDYIFHCHPPDQKIPKPKRLQEWYKKMLDKAFAERIINDYKDIFKQANEDRLTSAKELPYFEGDFWPNVLEESIKELEQEEEERKKEESTAASETPEGSQGDSKNAKKKNNKKTNKNKSSISRANKKKPSMPNVSNDLSQKLYATMEKHKEVFFVIHLHAGPVISTQPPIVDPDPLLSCDLMDGRDAFLTLARDKHWEFSSLRRSKWSTLCMLVELHTQGQDRFVYTCNECKHHVETRWHCTVCEDYDLCINCYNTKSHTHKMVKWGLGLDDEGSSQGEPQSKSPQESRRLSIQRCIQSLVHACQCRNANCSLPSCQKMKRVVQHTKGCKRKTNGGCPVCKQLIALCCYHAKHCQENKCPVPFCLNIKHKLRQQQIQHRLQQAQLMRRRMATMNTRNVPQQSLPSPTSAPPGTPTQQPSTPQTPQPPAQPQPSPVNMSPAGFPNVARTQPPTIVSAGKPTNQVPAPPPPAQPPPAAVEAARQIEREAQQQQHLYRANINNGMPPGRAGMGTPGSQMTPVGLNVPRPNQVSGPVMSSMPPGQWQQAPIPQQQPMPGMPRPVMSMQAQAAVAGPRMPNVQPPRSISPSALQDLLRTLKSPSSPQQQQQVLNILKSNPQLMAAFIKQRTAKYVANQPGMQPQPGLQSQPGMQPQPGMHQQPSLQNLNAMQAGVPRPGVPPPQPAMGGLNPQGQALNIMNPGHNPNMTNMNPQYREMVRRQLLQHQQQQQQQQQQQQQQQNSASLAGGMAGHSQFQQPQGPGGYAPAMQQQRMQQHLPIQGSSMGQMAAPMGQLGQMGQPGLGADSTPNIQQALQQRILQQQQMKQQIGSPGQPNPMSPQQHMLSGQPQASHLPGQQIATSLSNQVRSPAPVQSPRPQSQPPHSSPSPRIQPQPSPHHVSPQTGSPHPGLAVTMASSMDQGHLGNPEQSAMLPQLNTPNRSALSSELSLVGDTTGDTLEKFVEGL.

2 disordered regions span residues 1-29 (MAEN…DNTD) and 73-168 (LRGG…PATS). Position 2 is an N-acetylalanine (Ala2). Residues 20–29 (PGFSANDNTD) are compositionally biased toward polar residues. Residues 79–89 (SSINPGIGNVS) are compositionally biased toward low complexity. The residue at position 120 (Ser120) is a Phosphoserine. Residues 121-168 (PLNQGDSSTPNLPKQAASTSGPTPPASQALNPQAQKQVGLVTSSPATS) show a composition bias toward polar residues. An Omega-N-methylarginine modification is found at Arg219. The segment at 226–409 (PAPAMQGATS…GKACQVAHCA (184 aa)) is interaction with SRCAP. A compositionally biased stretch (low complexity) spans 261 to 272 (GGMTKMGMTGTT). The disordered stretch occupies residues 261–292 (GGMTKMGMTGTTSPFGQPFSQTGGQQMGATGV). Polar residues predominate over residues 273-292 (SPFGQPFSQTGGQQMGATGV). Residues 346-432 (DPEKRKLIQQ…RHDCPVCLPL (87 aa)) form a TAZ-type 1 zinc finger. Positions 362, 366, 379, 384, 393, 397, 403, 408, 417, 421, 426, and 429 each coordinate Zn(2+). The KIX domain occupies 586–665 (GVRKGWHEHV…KIYKIQKELE (80 aa)). Asymmetric dimethylarginine occurs at positions 600 and 624. The residue at position 656 (Lys656) is an N6-acetyllysine. Positions 792–811 (FLPQNQFPSSSGAMSVNSVG) are enriched in polar residues. The tract at residues 792-1088 (FLPQNQFPSS…SQPRKKIFKP (297 aa)) is disordered. A compositionally biased stretch (pro residues) spans 846–862 (PCPPVTQSPLHPTPPPA). Positions 894–906 (VSSGQTPTPTPGS) are enriched in polar residues. 2 stretches are compositionally biased toward low complexity: residues 909–930 (SAAQ…VTPQ) and 938–957 (PSVA…HTQP). The span at 974–989 (PTPSSVTSAETSSQQP) shows a compositional bias: polar residues. A Glycyl lysine isopeptide (Lys-Gly) (interchain with G-Cter in SUMO1) cross-link involves residue Lys999. Residues 1012 to 1022 (TESKGEPRSEM) show a composition bias toward basic and acidic residues. Residue Lys1015 is modified to N6-acetyllysine. Ser1031 is modified (phosphoserine). Residues 1033–1060 (VKEETDTTEQKSEPMEVEEKKPEVKVEA) are compositionally biased toward basic and acidic residues. Glycyl lysine isopeptide (Lys-Gly) (interchain with G-Cter in SUMO1) cross-links involve residues Lys1034 and Lys1057. Positions 1068–1080 (SNDTASQSTSPSQ) are enriched in polar residues. The residue at position 1077 (Ser1077) is a Phosphoserine. The Bromo domain occupies 1086-1193 (FKPEELRQAL…EVFEQEIDPV (108 aa)). The interval 1125–1171 (DYFDIVKNPMDLSTIKRKLDTGQYQEPWQYVDDVWLMFNNAWLYNRK) is interaction with histone. Residues 1163–1181 (NNAWLYNRKTSRVYKFCSK) are interaction with ASF1A. The residue at position 1217 (Lys1217) is an N6-acetyllysine. In terms of domain architecture, CBP/p300-type HAT spans 1324–1701 (KFSAKRLQTT…MLVELHTQGQ (378 aa)). A phosphoserine; by IKKA mark is found at Ser1383 and Ser1387. Residues 1434 to 1436 (YLD) form an interaction with histone region. Acetyl-CoA contacts are provided by residues 1435–1437 (LDS), 1447–1448 (RT), Ile1494, Arg1499, and Trp1503. Residues 1557–1569 (LEQEEEERKKEES) show a composition bias toward basic and acidic residues. Positions 1557-1616 (LEQEEEERKKEESTAASETPEGSQGDSKNAKKKNNKKTNKNKSSISRANKKKPSMPNVSN) are disordered. Lys1584, Lys1592, Lys1593, Lys1596, and Lys1598 each carry N6-acetyllysine. The segment covering 1586–1596 (AKKKNNKKTNK) has biased composition (basic residues). A ZZ-type zinc finger spans residues 1703–1751 (RFVYTCNECKHHVETRWHCTVCEDYDLCINCYNTKSHTHKMVKWGLGLD). Zn(2+)-binding residues include Cys1708, Cys1711, Cys1721, Cys1724, Cys1730, Cys1733, His1739, and His1741. N6-acetyllysine occurs at positions 1742 and 1745. Ser1764 bears the Phosphoserine mark. A TAZ-type 2 zinc finger spans residues 1766–1847 (QESRRLSIQR…KCPVPFCLNI (82 aa)). Residues 1875–1959 (TRNVPQQSLP…AQPPPAAVEA (85 aa)) form a disordered region. 2 stretches are compositionally biased toward pro residues: residues 1901–1913 (PQTP…PQPS) and 1944–1955 (PAPPPPAQPPPA). Ser2064, Ser2077, and Ser2080 each carry phosphoserine. Residues 2112 to 2421 (NQPGMQPQPG…NTPNRSALSS (310 aa)) are disordered. Positions 2113–2138 (QPGMQPQPGLQSQPGMQPQPGMHQQP) are enriched in low complexity. Over residues 2167-2188 (PQGQALNIMNPGHNPNMTNMNP) the composition is skewed to polar residues. Low complexity-rich tracts occupy residues 2197-2216 (QLLQ…QQQQ), 2260-2279 (MGQM…PGLG), and 2286-2304 (IQQA…KQQI). Polar residues-rich tracts occupy residues 2314 to 2326 (SPQQ…QPQA) and 2333 to 2342 (QIATSLSNQV). Positions 2348–2371 (VQSPRPQSQPPHSSPSPRIQPQPS) are enriched in pro residues. Residue Ser2350 is modified to Phosphoserine. Positions 2410 to 2421 (QLNTPNRSALSS) are enriched in polar residues.

As to quaternary structure, part of a complex composed of MSX3, CREBBP/CBP AND EP300/p300; the interaction with MSX3 decreases histone acetylation activity. Interacts with DHX9 (via N-terminus); this interaction mediates association with RNA polymerase II holoenzyme and stimulates CREB-dependent transcriptional activation. Interacts (via transactivation domain and C-terminus) with PCNA; the interaction occurs on chromatin in UV-irradiated damaged cells. Found in a complex containing NCOA2; NCOA3; IKKA; IKKB and IKBKG. Probably part of a complex with HIF1A and EP300. The TAZ-type 1 domain interacts with HIF1A. Interacts with SRCAP, ELF3, MLLT7/FOXO4, N4BP2, NCOA6, PCAF, PELP1, PML, SMAD1, SMAD2, SMAD3, SPIB and TRERF1. Interacts with KLF1; the interaction results in acetylation and enhancement of transcriptional activity of KLF1. Interacts with MAFG; the interaction acetylates MAFG in the basic region and stimulates NFE2 transcriptional activity through increasing its DNA-binding activity. Interacts with IRF2; the interaction acetylates IRF2 and regulates its activity on the H4 promoter. Interacts with IRF3 (when phosphorylated); forming the dsRNA-activated factor 1 (DRAF1), a complex which activates the transcription of the type I interferon genes. Interacts (via N-terminus) with SS18L1/CREST (via C-terminus). Interacts with FOXO1; the interaction acetylates FOXO1 and inhibits its transcriptional activity. Interacts with MECOM and MTDH. Interacts with ASF1A and ASF1B; this promotes histone acetylation. Interacts with acetylated TP53/p53 and with the acetylated histones H3 and H4. Interacts with CITED1 (via C-terminus). Interacts with GATA1; the interaction results in acetylation and enhancement of transcriptional activity of GATA1. Interacts with MAF, CARM1. NCOA3, ZCCHC12, DDX17, DDX5 and CITED4 (C-terminal region). Interacts with phosphorylated CREB1. Interacts with DAXX; the interaction is dependent on CBP sumoylation and results in suppression of the transcriptional activity via recruitment of HDAC2 to DAXX. Interacts with NPAS2, CLOCK and BMAL1. Interacts with SMAD4; negatively regulated by ZBTB7A. Forms a complex with KMT2A and CREB1. Interacts with DDX3X; this interaction may facilitate HNF4A acetylation. Interacts with MSX1; the interaction may inhibit MSX1 autoinactivation. Interacts with MSX3. Interacts with ACSS2. Methylation of the KIX domain by CARM1 blocks association with CREB. This results in the blockade of CREB signaling, and in activation of apoptotic response. Post-translationally, phosphorylated by CHUK/IKKA at Ser-1383 and Ser-1387; these phosphorylations promote cell growth by switching the binding preference of CREBBP from TP53 to NF-kappa-B. In terms of processing, sumoylation negatively regulates transcriptional activity via the recruitment of DAAX. Autoacetylation is required for binding to protein substrates, such as acetylated histones and acetylated TP53/p53. Autoacetylation is induced by glucose and fatty acids.

The protein localises to the cytoplasm. It is found in the nucleus. The enzyme catalyses L-lysyl-[histone] + acetyl-CoA = N(6)-acetyl-L-lysyl-[histone] + CoA + H(+). The catalysed reaction is L-lysyl-[protein] + acetyl-CoA = N(6)-acetyl-L-lysyl-[protein] + CoA + H(+). It carries out the reaction (S)-lactoyl-CoA + L-lysyl-[protein] = N(6)-[(S)-lactoyl]-L-lysyl-[protein] + CoA + H(+). Its function is as follows. Acetylates histones, giving a specific tag for transcriptional activation. Mediates acetylation of histone H3 at 'Lys-18' and 'Lys-27' (H3K18ac and H3K27ac, respectively). Also acetylates non-histone proteins, like DDX21, FBL, IRF2, MAFG, NCOA3, POLR1E/PAF53 and FOXO1. Binds specifically to phosphorylated CREB and enhances its transcriptional activity toward cAMP-responsive genes. Acts as a coactivator of ALX1. Acts as a circadian transcriptional coactivator which enhances the activity of the circadian transcriptional activators: NPAS2-BMAL1 and CLOCK-BMAL1 heterodimers. Acetylates PCNA; acetylation promotes removal of chromatin-bound PCNA and its degradation during nucleotide excision repair (NER). Acetylates POLR1E/PAF53, leading to decreased association of RNA polymerase I with the rDNA promoter region and coding region. Acetylates DDX21, thereby inhibiting DDX21 helicase activity. Acetylates FBL, preventing methylation of 'Gln-105' of histone H2A (H2AQ104me). In addition to protein acetyltransferase, can use different acyl-CoA substrates, such as lactoyl-CoA, and is able to mediate protein lactylation. Catalyzes lactylation of MRE11 in response to DNA damage, thereby promoting DNA double-strand breaks (DSBs) via homologous recombination (HR). Functions as a transcriptional coactivator for SMAD4 in the TGF-beta signaling pathway. The protein is Histone lysine acetyltransferase CREBBP (Crebbp) of Mus musculus (Mouse).